The sequence spans 245 residues: MIPARRFLLSPFVGVTFIVVLVSLYFRSSFKSPQHQYQKRLFSAEELALYNGTDETLPILLGILGSVFDVTKGKFHYGSGGGYNHFAGRDASRAFVSGNFTGDGLTDSLQGLSSSEVKSIVDWRGFYSRTYTPVGKLVGRYYDSQGNPTKHLKGAEAKASRGAQLMEKQKTEEAKQSNCNSRWSQDEGGEVWCDVGVPRLVQRPLEIAITGSMSKRCACFEEDQLDQSGLEIYKDCEPLAKTCRV.

A helical transmembrane segment spans residues 6–26; it reads RFLLSPFVGVTFIVVLVSLYF. In terms of domain architecture, Cytochrome b5 heme-binding spans 39-138; it reads KRLFSAEELA…RTYTPVGKLV (100 aa). Residues 45-138 form a steroid-binding region; that stretch reads EELALYNGTD…RTYTPVGKLV (94 aa).

It belongs to the cytochrome b5 family. MAPR subfamily.

Its subcellular location is the membrane. This is Membrane-associated progesterone-binding protein 4 from Arabidopsis thaliana (Mouse-ear cress).